The following is a 298-amino-acid chain: Estradiol 17-beta-dehydrogenase 11 (298 aa).

Residues 1–21 form the signal peptide; the sequence is MKYLLDLILLLPLLIVFSIES. 40 to 64 contributes to the NADP(+) binding site; it reads LITGAGHGIGRLTAYEFAKLNTKLV. Ser172 serves as a coordination point for substrate. Catalysis depends on Tyr185, which acts as the Proton acceptor.

The protein belongs to the short-chain dehydrogenases/reductases (SDR) family. 17-beta-HSD 3 subfamily. In terms of tissue distribution, expressed in the liver (at protein level). Also expressed in the intestine and, at much lower levels, in the kidney.

It is found in the endoplasmic reticulum. The protein resides in the lipid droplet. It catalyses the reaction 17beta-estradiol + NAD(+) = estrone + NADH + H(+). The catalysed reaction is 17beta-estradiol + NADP(+) = estrone + NADPH + H(+). In terms of biological role, can convert androstan-3-alpha,17-beta-diol (3-alpha-diol) to androsterone in vitro, suggesting that it may participate in androgen metabolism during steroidogenesis. May act by metabolizing compounds that stimulate steroid synthesis and/or by generating metabolites that inhibit it. Has no activity toward DHEA (dehydroepiandrosterone), or A-dione (4-androste-3,17-dione), and only a slight activity toward testosterone to A-dione. The chain is Estradiol 17-beta-dehydrogenase 11 (Hsd17b11) from Mus musculus (Mouse).